Reading from the N-terminus, the 242-residue chain is Small ribosomal subunit protein uS2 (242 aa).

The protein belongs to the universal ribosomal protein uS2 family.

This Shewanella frigidimarina (strain NCIMB 400) protein is Small ribosomal subunit protein uS2.